A 471-amino-acid polypeptide reads, in one-letter code: Mitochondrial distribution and morphology protein 10 (471 aa).

Disordered stretches follow at residues 272 to 291, 374 to 394, and 436 to 455; these read TEMP…SNHG, ADTP…DEEN, and SWAA…GGVS. Low complexity predominate over residues 276 to 288; the sequence is SSSSSTSSTTTTS. Over residues 444–455 the composition is skewed to gly residues; the sequence is AGGGQSVGGGVS.

It belongs to the MDM10 family. In terms of assembly, component of the ER-mitochondria encounter structure (ERMES) or MDM complex, composed of mmm1, mdm10, mdm12 and mdm34. Associates with the mitochondrial outer membrane sorting assembly machinery SAM(core) complex.

Its subcellular location is the mitochondrion outer membrane. Component of the ERMES/MDM complex, which serves as a molecular tether to connect the endoplasmic reticulum and mitochondria. Components of this complex are involved in the control of mitochondrial shape and protein biogenesis and may function in phospholipid exchange. mdm10 is involved in the late assembly steps of the general translocase of the mitochondrial outer membrane (TOM complex). Functions in the tom40-specific route of the assembly of outer membrane beta-barrel proteins, including the association of tom40 with the receptor tom22 and small TOM proteins. Can associate with the SAM(core) complex as well as the mdm12-mmm1 complex, both involved in late steps of the major beta-barrel assembly pathway, that is responsible for biogenesis of all outer membrane beta-barrel proteins. May act as a switch that shuttles between both complexes and channels precursor proteins into the tom40-specific pathway. Plays a role in mitochondrial morphology and in the inheritance of mitochondria. In Neosartorya fischeri (strain ATCC 1020 / DSM 3700 / CBS 544.65 / FGSC A1164 / JCM 1740 / NRRL 181 / WB 181) (Aspergillus fischerianus), this protein is Mitochondrial distribution and morphology protein 10 (mdmB).